A 252-amino-acid polypeptide reads, in one-letter code: Serine/threonine phosphatase stp (252 aa).

The disordered stretch occupies residues 1-22; sequence MHAEFRTDRGRIRHHNEDNGGV. In terms of domain architecture, PPM-type phosphatase spans 2–242; that stretch reads HAEFRTDRGR…DNITVLLVER (241 aa). Residues D36, G37, D194, and D233 each coordinate Mn(2+).

The protein belongs to the PP2C family. Requires Mn(2+) as cofactor.

It localises to the cytoplasm. Its subcellular location is the membrane. The enzyme catalyses O-phospho-L-seryl-[protein] + H2O = L-seryl-[protein] + phosphate. The catalysed reaction is O-phospho-L-threonyl-[protein] + H2O = L-threonyl-[protein] + phosphate. In terms of biological role, protein phosphatase that dephosphorylates EF-Tu. The protein is Serine/threonine phosphatase stp (stp) of Listeria innocua serovar 6a (strain ATCC BAA-680 / CLIP 11262).